Reading from the N-terminus, the 257-residue chain is Diphthine synthase (257 aa).

Residues Leu-9, Asp-85, Val-88, 113–114 (SI), Leu-164, Ala-209, and His-234 contribute to the S-adenosyl-L-methionine site.

The protein belongs to the diphthine synthase family. As to quaternary structure, homodimer.

It carries out the reaction 2-[(3S)-amino-3-carboxypropyl]-L-histidyl-[translation elongation factor 2] + 3 S-adenosyl-L-methionine = diphthine-[translation elongation factor 2] + 3 S-adenosyl-L-homocysteine + 3 H(+). The protein operates within protein modification; peptidyl-diphthamide biosynthesis. S-adenosyl-L-methionine-dependent methyltransferase that catalyzes the trimethylation of the amino group of the modified target histidine residue in translation elongation factor 2 (EF-2), to form an intermediate called diphthine. The three successive methylation reactions represent the second step of diphthamide biosynthesis. This is Diphthine synthase from Methanocaldococcus jannaschii (strain ATCC 43067 / DSM 2661 / JAL-1 / JCM 10045 / NBRC 100440) (Methanococcus jannaschii).